The following is a 330-amino-acid chain: MDRVLPFRFAEEEGVFWLLDQRRLPQEEVYVPVRTAREMAQAIRDMVVRGAPAIGVSAAFGMVLAHLAGEDLEEADRRLRASRPTAVNLFHALDRMRPFWGDLAGSLLEARRIWREVEETEAAISRHGAQVLWGQVLTHCNTGPLATGGYGTALGAIVEAYRLGRVRHVWVDETRPYLQGARLTAYELQKAGVPATLITDGMAGWLMARGAVDAVVVGVDRMALNGDFANKVGTYALAVLAHHHGIPFYAALPLSSVDPRLASGEGIPIEERSPEEVVAFRGVRIAPEGFPAYHPAFDVTPHRYLTGIITEKGVLYPPFAEGLRRALGLD.

Substrate-binding positions include 49–51 (RGA), Arg-83, and Gln-179. Asp-220 (proton donor) is an active-site residue. 230–231 (NK) is a substrate binding site.

The protein belongs to the eIF-2B alpha/beta/delta subunits family. MtnA subfamily.

It catalyses the reaction 5-(methylsulfanyl)-alpha-D-ribose 1-phosphate = 5-(methylsulfanyl)-D-ribulose 1-phosphate. It functions in the pathway amino-acid biosynthesis; L-methionine biosynthesis via salvage pathway; L-methionine from S-methyl-5-thio-alpha-D-ribose 1-phosphate: step 1/6. Catalyzes the interconversion of methylthioribose-1-phosphate (MTR-1-P) into methylthioribulose-1-phosphate (MTRu-1-P). The chain is Methylthioribose-1-phosphate isomerase from Thermus thermophilus (strain ATCC 27634 / DSM 579 / HB8).